A 140-amino-acid chain; its full sequence is Small ribosomal subunit protein bS16 (140 aa).

The disordered stretch occupies residues 86 to 140; it reads TVGKAKQAAKREEEAKQAAKEAAEAKAAAEAEAAAAAEAAKAEDAPDGETESSEG. Residues 94 to 114 are compositionally biased toward basic and acidic residues; it reads AKREEEAKQAAKEAAEAKAAA. Positions 115–124 are enriched in low complexity; that stretch reads EAEAAAAAEA. The span at 130–140 shows a compositional bias: acidic residues; that stretch reads APDGETESSEG.

The protein belongs to the bacterial ribosomal protein bS16 family.

The protein is Small ribosomal subunit protein bS16 of Parasynechococcus marenigrum (strain WH8102).